Consider the following 284-residue polypeptide: Lipoyl synthase (284 aa).

The [4Fe-4S] cluster site is built by cysteine 34, cysteine 39, cysteine 45, cysteine 60, cysteine 64, cysteine 67, and serine 272. The Radical SAM core domain maps to 46–261 (FARRTATFMI…EEIGYKLGFK (216 aa)).

Belongs to the radical SAM superfamily. Lipoyl synthase family. [4Fe-4S] cluster is required as a cofactor.

It localises to the cytoplasm. The enzyme catalyses [[Fe-S] cluster scaffold protein carrying a second [4Fe-4S](2+) cluster] + N(6)-octanoyl-L-lysyl-[protein] + 2 oxidized [2Fe-2S]-[ferredoxin] + 2 S-adenosyl-L-methionine + 4 H(+) = [[Fe-S] cluster scaffold protein] + N(6)-[(R)-dihydrolipoyl]-L-lysyl-[protein] + 4 Fe(3+) + 2 hydrogen sulfide + 2 5'-deoxyadenosine + 2 L-methionine + 2 reduced [2Fe-2S]-[ferredoxin]. It participates in protein modification; protein lipoylation via endogenous pathway; protein N(6)-(lipoyl)lysine from octanoyl-[acyl-carrier-protein]: step 2/2. Catalyzes the radical-mediated insertion of two sulfur atoms into the C-6 and C-8 positions of the octanoyl moiety bound to the lipoyl domains of lipoate-dependent enzymes, thereby converting the octanoylated domains into lipoylated derivatives. In Caldanaerobacter subterraneus subsp. tengcongensis (strain DSM 15242 / JCM 11007 / NBRC 100824 / MB4) (Thermoanaerobacter tengcongensis), this protein is Lipoyl synthase.